The sequence spans 354 residues: Ferredoxin--NADP reductase, chloroplastic (354 aa).

The transit peptide at 1–35 directs the protein to the chloroplast; it reads MASLRKPSNHADRACSRRLRVATRVAGRRMCRPVA. An FAD-binding FR-type domain is found at 69–198; it reads KAPFKAKVRS…TGPTGKVLLL (130 aa). Lysine 118 and lysine 124 each carry N6,N6,N6-trimethyllysine. FAD contacts are provided by residues 130–133, 151–153, and tyrosine 157; these read RLYS and CVR. NADP(+)-binding residues include serine 133 and arginine 153. N6,N6-dimethyllysine is present on lysine 170. Residues 172-174 and threonine 213 each bind FAD; that span reads LCS. Residues threonine 213, 245 to 246, 275 to 276, lysine 285, 313 to 314, and glutamate 352 each bind NADP(+); these read VG, SR, and GL.

Belongs to the ferredoxin--NADP reductase type 1 family. Requires FAD as cofactor.

It localises to the plastid. Its subcellular location is the chloroplast stroma. It is found in the chloroplast thylakoid membrane. It catalyses the reaction 2 reduced [2Fe-2S]-[ferredoxin] + NADP(+) + H(+) = 2 oxidized [2Fe-2S]-[ferredoxin] + NADPH. Its pathway is energy metabolism; photosynthesis. May play a key role in regulating the relative amounts of cyclic and non-cyclic electron flow to meet the demands of the plant for ATP and reducing power. In Chlamydomonas reinhardtii (Chlamydomonas smithii), this protein is Ferredoxin--NADP reductase, chloroplastic (PETH).